We begin with the raw amino-acid sequence, 895 residues long: Histone-lysine N-methyltransferase EZ3 (895 aa).

Positions 1–13 (MASSSKASDSSSQ) are enriched in low complexity. 2 disordered regions span residues 1 to 30 (MASS…APAS) and 396 to 446 (SSVS…PGKR). Positions 396–422 (SSVSAEESTTPPSADTSETENASSDMP) are enriched in polar residues. Residues 427–436 (RKYKISKRGP) are compositionally biased toward basic residues. In terms of domain architecture, SANT spans 528–578 (TLSCWSALERDLYLKGIEIFGKNSCLIARNLLSGMKTCMEVANYMYNNGAA). Residues 628–732 (AGHPTVRKRI…SLGEPPARGD (105 aa)) enclose the CXC domain. The region spanning 747 to 862 (QRILLGRSDV…ASEELFYDYR (116 aa)) is the SET domain. A disordered region spans residues 870–895 (AWARRPEGSKKDEASVSHHRAHKVAR). Positions 873–885 (RRPEGSKKDEASV) are enriched in basic and acidic residues. Over residues 886–895 (SHHRAHKVAR) the composition is skewed to basic residues.

This sequence belongs to the class V-like SAM-binding methyltransferase superfamily. Histone-lysine methyltransferase family. EZ subfamily. In terms of tissue distribution, widely expressed.

It localises to the nucleus. The catalysed reaction is L-lysyl(27)-[histone H3] + 3 S-adenosyl-L-methionine = N(6),N(6),N(6)-trimethyl-L-lysyl(27)-[histone H3] + 3 S-adenosyl-L-homocysteine + 3 H(+). Polycomb group (PcG) protein. Catalytic subunit of some PcG multiprotein complex, which methylates 'Lys-27' of histone H3, leading to transcriptional repression of the affected target genes. PcG proteins are not required to initiate repression, but to maintain it during later stages of development. The protein is Histone-lysine N-methyltransferase EZ3 (EZ3) of Zea mays (Maize).